The following is a 458-amino-acid chain: Argininosuccinate lyase (458 aa).

The protein belongs to the lyase 1 family. Argininosuccinate lyase subfamily.

It localises to the cytoplasm. It carries out the reaction 2-(N(omega)-L-arginino)succinate = fumarate + L-arginine. It participates in amino-acid biosynthesis; L-arginine biosynthesis; L-arginine from L-ornithine and carbamoyl phosphate: step 3/3. This chain is Argininosuccinate lyase, found in Actinobacillus pleuropneumoniae serotype 5b (strain L20).